The following is a 918-amino-acid chain: Melanoma-associated antigen E1 (918 aa).

Disordered stretches follow at residues Met1–Ala140, Glu154–Leu227, and Ser367–Pro388. The span at Ser8–Gly23 shows a compositional bias: basic residues. Composition is skewed to polar residues over residues Val70–Pro96, Gly113–Pro126, and Glu213–Leu227. MAGE domains follow at residues Met459 to Ala658 and Leu706 to Ala897. The tract at residues Ser704–Arg918 is interaction with DTNA.

As to quaternary structure, interacts with DTNA. Interacts with TRIM28. In terms of tissue distribution, expressed in cell bodies and dendrites of hippocampal and Purkinje neurons. Also expressed in peripheral nerve, where it localizes to the perineurium and myelin (at protein level). Predominantly expressed in brain and at low levels in the heart, liver, kidney, spleen, testis, lung, thymus, placenta and skeletal muscle.

It localises to the cytoplasm. The protein localises to the perinuclear region. Its subcellular location is the nucleus. It is found in the cell membrane. Its function is as follows. May enhance ubiquitin ligase activity of RING-type zinc finger-containing E3 ubiquitin-protein ligases. Proposed to act through recruitment and/or stabilization of the Ubl-conjugating enzyme (E2) at the E3:substrate complex. The polypeptide is Melanoma-associated antigen E1 (Magee1) (Mus musculus (Mouse)).